A 288-amino-acid polypeptide reads, in one-letter code: ATP synthase gamma chain (288 aa).

The protein belongs to the ATPase gamma chain family. F-type ATPases have 2 components, CF(1) - the catalytic core - and CF(0) - the membrane proton channel. CF(1) has five subunits: alpha(3), beta(3), gamma(1), delta(1), epsilon(1). CF(0) has three main subunits: a, b and c.

The protein localises to the cell inner membrane. Functionally, produces ATP from ADP in the presence of a proton gradient across the membrane. The gamma chain is believed to be important in regulating ATPase activity and the flow of protons through the CF(0) complex. The polypeptide is ATP synthase gamma chain (Rickettsia bellii (strain OSU 85-389)).